A 287-amino-acid chain; its full sequence is Bifunctional protein FolD (287 aa).

NADP(+) contacts are provided by residues 166-168 (GAS) and I232.

The protein belongs to the tetrahydrofolate dehydrogenase/cyclohydrolase family. Homodimer.

It carries out the reaction (6R)-5,10-methylene-5,6,7,8-tetrahydrofolate + NADP(+) = (6R)-5,10-methenyltetrahydrofolate + NADPH. It catalyses the reaction (6R)-5,10-methenyltetrahydrofolate + H2O = (6R)-10-formyltetrahydrofolate + H(+). It participates in one-carbon metabolism; tetrahydrofolate interconversion. Catalyzes the oxidation of 5,10-methylenetetrahydrofolate to 5,10-methenyltetrahydrofolate and then the hydrolysis of 5,10-methenyltetrahydrofolate to 10-formyltetrahydrofolate. This Chromohalobacter salexigens (strain ATCC BAA-138 / DSM 3043 / CIP 106854 / NCIMB 13768 / 1H11) protein is Bifunctional protein FolD.